Reading from the N-terminus, the 228-residue chain is Ribosomal RNA large subunit methyltransferase E (228 aa).

5 residues coordinate S-adenosyl-L-methionine: glycine 76, tryptophan 78, aspartate 99, aspartate 115, and aspartate 139. The Proton acceptor role is filled by lysine 179.

Belongs to the class I-like SAM-binding methyltransferase superfamily. RNA methyltransferase RlmE family.

The protein resides in the cytoplasm. It catalyses the reaction uridine(2552) in 23S rRNA + S-adenosyl-L-methionine = 2'-O-methyluridine(2552) in 23S rRNA + S-adenosyl-L-homocysteine + H(+). Its function is as follows. Specifically methylates the uridine in position 2552 of 23S rRNA at the 2'-O position of the ribose in the fully assembled 50S ribosomal subunit. The polypeptide is Ribosomal RNA large subunit methyltransferase E (Bradyrhizobium diazoefficiens (strain JCM 10833 / BCRC 13528 / IAM 13628 / NBRC 14792 / USDA 110)).